The chain runs to 501 residues: DDB1- and CUL4-associated factor 12-like protein 1 (501 aa).

A compositionally biased stretch (polar residues) spans 1–37; the sequence is MRQADSQTQPSPAEQETPQPAGPSNRSPPTMGPQQTG. A disordered region spans residues 1-67; it reads MRQADSQTQP…PAAPMATAGE (67 aa). WD repeat units follow at residues 185 to 225, 230 to 268, 298 to 337, and 384 to 423; these read PPSC…PVCL, GHRD…FNGS, PGNR…SRLL, and SREG…FLEE.

The protein belongs to the WD repeat DCAF12 family.

The protein is DDB1- and CUL4-associated factor 12-like protein 1 (Dcaf12l1) of Mus musculus (Mouse).